The chain runs to 198 residues: uncharacterized protein (198 aa).

The segment at 9–43 (CPVCGGKGTFVITSHQIDIPYFGPVLETTMICEKC) adopts a C4-type zinc-finger fold.

This sequence belongs to the ZPR1 family.

This is an uncharacterized protein from Methanocaldococcus jannaschii (strain ATCC 43067 / DSM 2661 / JAL-1 / JCM 10045 / NBRC 100440) (Methanococcus jannaschii).